Consider the following 117-residue polypeptide: MVKQQSKEEIALQLKSAVYLSVAKIVEAKLEDLNNDNAATTTTESNNKNNNNNMLIATPTFIAQLVELVYNQLINLGEDLELFCQHANRDIVEPSDLFMVTRKNPTLQQHLKDLLRQ.

This sequence belongs to the TAF9 family. CENP-S/MHF1 subfamily. In terms of assembly, the MHF histone-fold complex is a heterotetramer of 2 MHF1-MHF2 heterodimers. Together with MPH1/FANCM, forms the FANCM-MHF complex. Component of the inner kinetochore constitutive centromere-associated network (CCAN).

Its function is as follows. dsDNA-binding component of a FANCM-MHF complex involved in DNA damage repair and genome maintenance. FANCM-MHF promotes gene conversion at blocked replication forks, probably by reversal of the stalled fork. Component of the kinetochore, a multiprotein complex that assembles on centromeric DNA and attaches chromosomes to spindle microtubules, mediating chromosome segregation and sister chromatid segregation during meiosis and mitosis. Component of the inner kinetochore constitutive centromere-associated network (CCAN), which serves as a structural platform for outer kinetochore assembly. In Candida albicans (strain SC5314 / ATCC MYA-2876) (Yeast), this protein is Inner kinetochore subunit MHF1.